A 90-amino-acid polypeptide reads, in one-letter code: Small ribosomal subunit protein uS15 (90 aa).

This sequence belongs to the universal ribosomal protein uS15 family. Part of the 30S ribosomal subunit. Forms a bridge to the 50S subunit in the 70S ribosome, contacting the 23S rRNA.

One of the primary rRNA binding proteins, it binds directly to 16S rRNA where it helps nucleate assembly of the platform of the 30S subunit by binding and bridging several RNA helices of the 16S rRNA. Functionally, forms an intersubunit bridge (bridge B4) with the 23S rRNA of the 50S subunit in the ribosome. This chain is Small ribosomal subunit protein uS15, found in Helicobacter pylori (strain HPAG1).